Consider the following 1039-residue polypeptide: FERM domain-containing protein 4A (1039 aa).

Residues 20–322 enclose the FERM domain; the sequence is RRCQVHLLDD…SQHQFYLDRK (303 aa). Residues 358–420 are necessary for interaction with CYTH1; that stretch reads KGKIISGSSG…KLCLREAELT (63 aa). A compositionally biased stretch (low complexity) spans 366–382; it reads SGSLLSSGSQESDSSQS. The disordered stretch occupies residues 366–386; sequence SGSLLSSGSQESDSSQSAKKD. The stretch at 382 to 416 forms a coiled coil; sequence SAKKDMLAALKSRQEALEETLRQRLEELKKLCLRE. Position 530 is a phosphoserine (serine 530). The tract at residues 553–680 is disordered; that stretch reads DEDSQVTSTI…MPSTPDLRVR (128 aa). The span at 571 to 586 shows a compositional bias: pro residues; sequence GLPPRPPSHNRPPPPQ. A necessary for tight junction and adherens junction localization; Requires for interaction with PARD3 region spans residues 579–939; that stretch reads HNRPPPPQSL…QWYQRSTASH (361 aa). A phosphoserine mark is found at serine 604 and serine 615. Residues 623 to 638 are compositionally biased toward basic residues; it reads VKKRSSHSHSSSHKRF. Phosphoserine is present on residues serine 681 and serine 711. 2 disordered regions span residues 713 to 756 and 772 to 813; these read ESQG…HSSS and AEDS…AGGA. Residues 788 to 800 show a composition bias toward low complexity; it reads RAAGALGSASSGS. Serine 800, serine 872, and serine 901 each carry phosphoserine. Disordered stretches follow at residues 879–968 and 980–1039; these read FKES…STFV and CKAT…STDE. The span at 896–905 shows a compositional bias: polar residues; it reads LTPSRSQILR. The span at 912–929 shows a compositional bias: basic and acidic residues; that stretch reads EGAHDKGAGRAAVSDELR. Over residues 946-966 the composition is skewed to low complexity; that stretch reads SHTSSTSSDSGSQYSTSSQST. Composition is skewed to polar residues over residues 986–1000 and 1013–1023; these read ALPQSQRSSTPSSEI and TWQTGEATENS.

In terms of assembly, interacts (via coiled-coil domain) with CYTH1 (via coiled-coil domain). Interacts with PARD3 (via coiled-coil domain). Found in a complex with PARD3, CYTH1 and FRMD4A. Interacts with CYTH2. Interacts with CYTH3.

It localises to the cytoplasm. Its subcellular location is the cytoskeleton. The protein resides in the cell junction. It is found in the adherens junction. The protein localises to the tight junction. In terms of biological role, scaffolding protein that regulates epithelial cell polarity by connecting ARF6 activation with the PAR3 complex. Plays a redundant role with FRMD4B in epithelial polarization. May regulate MAPT secretion by activating ARF6-signaling. This Homo sapiens (Human) protein is FERM domain-containing protein 4A.